The chain runs to 273 residues: Cell division cycle-associated protein 3 (273 aa).

Disordered regions lie at residues 1–231 and 251–273; these read MGST…ALSE and GGGA…LMES. 2 positions are modified to phosphoserine: serine 29 and serine 31. Residues 32–45 are compositionally biased toward polar residues; the sequence is AGIQRTPIQVESSP. Threonine 37 is modified (phosphothreonine). A phosphoserine mark is found at serine 44 and serine 67. Position 75 is a phosphothreonine (threonine 75). The F-box-like stretch occupies residues 90–124; sequence KELSEVFETEVSETEVSESISSPVLGLPQETPLSS. A Phosphoserine modification is found at serine 93. The segment covering 94–105 has biased composition (acidic residues); the sequence is EVFETEVSETEV. 2 stretches are compositionally biased toward polar residues: residues 144-154 and 164-175; these read PWSQTELNSKQ and STETMVSGQTSD. Serine 204 is modified (phosphoserine). Threonine 207 is subject to Phosphothreonine. The span at 210 to 220 shows a compositional bias: polar residues; the sequence is QDDNSPGTLTL. At serine 214 the chain carries Phosphoserine. Threonine 217 carries the post-translational modification Phosphothreonine. The KEN box signature appears at 263-265; the sequence is KEN.

Interacts with SKP1. Part of a SCF (SKP1-cullin-F-box) protein ligase complex. Ubiquitinated and degraded by the APC/C-Cdh1 complex.

It is found in the cytoplasm. The protein localises to the cytosol. The protein operates within protein modification; protein ubiquitination. Functionally, F-box-like protein which is required for entry into mitosis. Acts by participating in E3 ligase complexes that mediate the ubiquitination and degradation of WEE1 kinase at G2/M phase. This is Cell division cycle-associated protein 3 (Cdca3) from Rattus norvegicus (Rat).